A 472-amino-acid chain; its full sequence is Argininosuccinate lyase (472 aa).

The protein belongs to the lyase 1 family. Argininosuccinate lyase subfamily.

The protein resides in the cytoplasm. The catalysed reaction is 2-(N(omega)-L-arginino)succinate = fumarate + L-arginine. It functions in the pathway amino-acid biosynthesis; L-arginine biosynthesis; L-arginine from L-ornithine and carbamoyl phosphate: step 3/3. This Mycolicibacterium paratuberculosis (strain ATCC BAA-968 / K-10) (Mycobacterium paratuberculosis) protein is Argininosuccinate lyase.